Reading from the N-terminus, the 1746-residue chain is Tenascin (1746 aa).

The first 22 residues, 1 to 22 (MGVVTRLLVGTFLASLALPAQG), serve as a signal peptide directing secretion. An involved in hexamer formation region spans residues 23–185 (GVLKKVIRHK…CEPGWKGPNC (163 aa)). N-linked (GlcNAc...) asparagine glycosylation is present at N38. S65, S70, and S72 each carry phosphoserine. Residue S72 is glycosylated (O-linked (Xyl...) (chondroitin sulfate) serine). A coiled-coil region spans residues 118 to 145 (DVKELLSRLEELENLVSSLREQCTSGAG). N-linked (GlcNAc...) asparagine glycosylation is found at N166 and N184. The region spanning 174 to 186 (CVCEPGWKGPNCS) is the EGF-like 1; incomplete domain. EGF-like domains lie at 187 to 217 (EPEC…EDCS), 218 to 249 (QLAC…DCSR), 250 to 280 (ETCP…EDCN), 281 to 311 (EPLC…EDCG), 312 to 342 (ELIC…EDCG), 343 to 373 (RLAC…ADCS), 374 to 404 (ERRC…EDCG), 405 to 435 (ELRC…EDCS), 436 to 466 (QLRC…YDCS), 467 to 497 (EMSC…EDCR), 498 to 528 (ELRC…PDCA), 529 to 559 (DLAC…KDCG), 560 to 589 (QRRC…GLDC), and 590 to 620 (GQRS…GEDC). 42 disulfide bridges follow: C190–C200, C194–C205, C207–C216, C221–C231, C225–C236, C238–C247, C252–C263, C256–C268, C270–C279, C284–C294, C288–C299, C301–C310, C315–C325, C319–C330, C332–C341, C346–C356, C350–C361, C363–C372, C377–C387, C381–C392, C394–C403, C408–C418, C412–C423, C425–C434, C439–C449, C443–C454, C456–C465, C470–C480, C474–C485, C487–C496, C501–C511, C505–C516, C518–C527, C532–C542, C536–C547, C549–C558, C563–C573, C567–C578, C580–C589, C594–C604, C598–C609, and C611–C620. Residue N327 is glycosylated (N-linked (GlcNAc...) asparagine). Fibronectin type-III domains lie at 625 to 717 (PPKD…TPEG), 718 to 801 (LKFK…VTTT), 805 to 894 (APSQ…TGLD), 895 to 988 (APRN…LDPP), 989 to 1075 (KDFR…AGEP), 1076 to 1166 (EIGN…EAEP), 1167 to 1256 (EVDN…TAMG), 1257 to 1346 (SPKE…ALDG), 1347 to 1433 (PSGL…TDLD), and 1434 to 1522 (SPRD…IGLL). N788 carries N-linked (GlcNAc...) asparagine glycosylation. A Phosphothreonine modification is found at T905. 3 N-linked (GlcNAc...) asparagine glycosylation sites follow: N1034, N1079, and N1121. The N-linked (GlcNAc...) asparagine glycan is linked to N1354. The 216-residue stretch at 1520–1735 (GLLYPFPRDC…FAEMKLRPSN (216 aa)) folds into the Fibrinogen C-terminal domain.

This sequence belongs to the tenascin family. In terms of assembly, homohexamer; disulfide-linked. A homotrimer may be formed in the triple coiled-coil region and may be stabilized by disulfide rings at both ends. Two of such half-hexabrachions may be disulfide linked within the central globule. Interacts with CSPG4. Interacts (via the 3rd fibronectin type-III domain) with integrin ITGA9:ITGB1. In terms of tissue distribution, submaxillary glands and brain.

It is found in the secreted. The protein resides in the extracellular space. Its subcellular location is the extracellular matrix. In terms of biological role, extracellular matrix protein implicated in guidance of migrating neurons as well as axons during development, synaptic plasticity as well as neuronal regeneration. Promotes neurite outgrowth from cortical neurons grown on a monolayer of astrocytes. Ligand for integrins alpha-8/beta-1, alpha-9/beta-1, alpha-V/beta-3 and alpha-V/beta-6. In tumors, stimulates angiogenesis by elongation, migration and sprouting of endothelial cells. In Sus scrofa (Pig), this protein is Tenascin (TNC).